A 216-amino-acid polypeptide reads, in one-letter code: Ribosomal RNA small subunit methyltransferase G (216 aa).

Residues Gly83, Met88, 134–135, and Arg149 each bind S-adenosyl-L-methionine; that span reads VE.

The protein belongs to the methyltransferase superfamily. RNA methyltransferase RsmG family.

The protein resides in the cytoplasm. It catalyses the reaction guanosine(527) in 16S rRNA + S-adenosyl-L-methionine = N(7)-methylguanosine(527) in 16S rRNA + S-adenosyl-L-homocysteine. Specifically methylates the N7 position of guanine in position 527 of 16S rRNA. The protein is Ribosomal RNA small subunit methyltransferase G of Pseudomonas entomophila (strain L48).